The following is a 189-amino-acid chain: Protein Rex (189 aa).

A compositionally biased stretch (basic residues) spans 1–16; sequence MPKTRRRPRRSQRKRP. The segment at 1 to 27 is disordered; sequence MPKTRRRPRRSQRKRPPTPWPTSQGLD. The short motif at 2 to 18 is the Nuclear localization signal, and RNA-binding (RxRE) element; sequence PKTRRRPRRSQRKRPPT. The homomultimerization stretch occupies residues 56–70; sequence RPAYIVTPYWPPVQS. Phosphoserine; by host is present on Ser-70. A disordered region spans residues 73–189; it reads SPGTPSMDAL…PPSPGPSCPT (117 aa). Residues 80-94 are compositionally biased toward low complexity; it reads DALSAQLYSSLSLDS. Positions 82 to 93 match the Nuclear export signal motif; the sequence is LSAQLYSSLSLD. A homomultimerization region spans residues 123–131; that stretch reads PSSRPCANT. Over residues 143–164 the composition is skewed to polar residues; that stretch reads LGSTSQPCLFQTPDSGPKTCTP. Residue Thr-174 is modified to Phosphothreonine; by host. Residue Ser-177 is modified to Phosphoserine; by host. A compositionally biased stretch (pro residues) spans 178–189; the sequence is FPPPSPGPSCPT.

This sequence belongs to the deltaretrovirus Rex protein family. In terms of assembly, homomultimer. Multimeric assembly is essential for activity and involves XPO1. Binds to human XPO1 and KPNB1. Interacts (via N-terminal nuclear localization signal) with human NPM1.

Its subcellular location is the host nucleus. It is found in the host nucleolus. The protein resides in the host cytoplasm. Its function is as follows. Rex escorts unspliced gag-pro-pol and singly spliced env mRNAs out of the nucleus of infected cells. These mRNAs carry a recognition sequence called Rex responsive element (RxRE or XRE) located at the 3' region of the long terminal repeat (LTR). This function is essential since most HTLV proteins are translated from unspliced or partially spliced pre-mRNAs that cannot exit the nucleus by the pathway used by fully processed cellular mRNAs. Rex itself is translated from a fully spliced mRNA that probably readily exits the nucleus. Rex's nuclear localization signal (NLS) binds directly to KPNB1/importin beta-1 without previous binding to KPNA1/importin alpha-1. KPNB1 binds to the GDP bound form of RAN (Ran-GDP) and targets Rex to the nucleus. In the nucleus, the conversion from Ran-GDP to Ran-GTP dissociates Rex from KPNB1 and allows Rex's binding to the RRE in viral pre-mRNAs. Rex multimerizes on the RRE via cooperative assembly. This multimerization is critical for its full biological activity, since it may shield the viral RNA from being spliced or down-regulated, and probably exposes Rex's nuclear export signal (NES) to the surface. Rex can then form a complex with XPO1/CRM1, RANBP3 and Ran-GTP, leading to nuclear export of the complex. Conversion from Ran-GTP to Ran-GDP mediates dissociation of the Rex/RRE/XPO1/RANBP3/RAN complex, so that Rex can return to the nucleus for a subsequent round of export. The polypeptide is Protein Rex (Human T-cell leukemia virus 1 (strain Japan ATK-1 subtype A) (HTLV-1)).